The following is a 75-amino-acid chain: Putative antitoxin VapB12 (75 aa).

Functionally, putative antitoxin component of a possible type II toxin-antitoxin (TA) system. The cognate toxin is VapC12. This is Putative antitoxin VapB12 (vapB12) from Mycobacterium tuberculosis (strain CDC 1551 / Oshkosh).